We begin with the raw amino-acid sequence, 306 residues long: Ribosomal RNA small subunit methyltransferase A (306 aa).

Positions 37, 39, 64, 85, 115, and 134 each coordinate S-adenosyl-L-methionine.

It belongs to the class I-like SAM-binding methyltransferase superfamily. rRNA adenine N(6)-methyltransferase family. RsmA subfamily.

It is found in the cytoplasm. The catalysed reaction is adenosine(1518)/adenosine(1519) in 16S rRNA + 4 S-adenosyl-L-methionine = N(6)-dimethyladenosine(1518)/N(6)-dimethyladenosine(1519) in 16S rRNA + 4 S-adenosyl-L-homocysteine + 4 H(+). Specifically dimethylates two adjacent adenosines (A1518 and A1519) in the loop of a conserved hairpin near the 3'-end of 16S rRNA in the 30S particle. May play a critical role in biogenesis of 30S subunits. The sequence is that of Ribosomal RNA small subunit methyltransferase A from Mycobacterium leprae (strain Br4923).